Here is a 371-residue protein sequence, read N- to C-terminus: Flagellar P-ring protein (371 aa).

A signal peptide spans 1–25; that stretch reads MKMRACKWLLTLAVAFAATLSSAYA.

It belongs to the FlgI family. In terms of assembly, the basal body constitutes a major portion of the flagellar organelle and consists of four rings (L,P,S, and M) mounted on a central rod.

Its subcellular location is the periplasm. It localises to the bacterial flagellum basal body. Functionally, assembles around the rod to form the L-ring and probably protects the motor/basal body from shearing forces during rotation. In Sinorhizobium medicae (strain WSM419) (Ensifer medicae), this protein is Flagellar P-ring protein.